A 432-amino-acid chain; its full sequence is Glutamate-1-semialdehyde 2,1-aminomutase (432 aa).

Lys-272 is subject to N6-(pyridoxal phosphate)lysine.

The protein belongs to the class-III pyridoxal-phosphate-dependent aminotransferase family. HemL subfamily. As to quaternary structure, homodimer. The cofactor is pyridoxal 5'-phosphate.

It is found in the cytoplasm. It carries out the reaction (S)-4-amino-5-oxopentanoate = 5-aminolevulinate. Its pathway is porphyrin-containing compound metabolism; protoporphyrin-IX biosynthesis; 5-aminolevulinate from L-glutamyl-tRNA(Glu): step 2/2. The protein operates within porphyrin-containing compound metabolism; chlorophyll biosynthesis. This chain is Glutamate-1-semialdehyde 2,1-aminomutase, found in Trichodesmium erythraeum (strain IMS101).